Consider the following 678-residue polypeptide: Depolymerase 2, capsule K56-specific (678 aa).

The protein in the N-terminal section; belongs to the Przondovirus depolymerase 2 family. As to quaternary structure, homotrimer. Interacts (via N-terminus) with depolymerase 1 (via N-terminus); this interaction probably gives rise to a branched tailspike.

Its subcellular location is the virion. In terms of biological role, functions as a receptor binding protein (RBP) and probably mediates the attachment to the host capsular exopolysaccharides. Displays a depolymerase activity that specifically degrades the K56-type polysaccharides of Klebsiella pneumoniae capsule, which allows the phage to reach the host cell membrane and bind the entry receptor. This chain is Depolymerase 2, capsule K56-specific, found in Klebsiella pneumoniae (Bacteriophage KN3-1).